A 182-amino-acid chain; its full sequence is Adenine phosphoribosyltransferase (182 aa).

This sequence belongs to the purine/pyrimidine phosphoribosyltransferase family. Homodimer.

Its subcellular location is the cytoplasm. The catalysed reaction is AMP + diphosphate = 5-phospho-alpha-D-ribose 1-diphosphate + adenine. Its pathway is purine metabolism; AMP biosynthesis via salvage pathway; AMP from adenine: step 1/1. Functionally, catalyzes a salvage reaction resulting in the formation of AMP, that is energically less costly than de novo synthesis. The sequence is that of Adenine phosphoribosyltransferase from Streptomyces avermitilis (strain ATCC 31267 / DSM 46492 / JCM 5070 / NBRC 14893 / NCIMB 12804 / NRRL 8165 / MA-4680).